A 264-amino-acid chain; its full sequence is MLIREFRVVLPLTVEEYRVGQLYSVAKTSSQETSNGEGVEVLVNEPYKEPEHEGQYTHKIYHLGSRLPGWIRALIPSSALKLEEKAWNAYPYCKTVLKSPFLGEKFTFIIESRHAQDNCKTENIHNLSEKELKERTVEVIDITKPIKDPKNYKETEDPTKIRSEKANRGPLEEEKWRESTEMPIMTCYKLVTVEFKYFGFQTKVENFMMGIEFDLFTKFHRQVYCWLDEWFGMSMDDVRAFELKTKEDLKKKLEEKDENKAAEK.

The tract at residues 151–174 (NYKETEDPTKIRSEKANRGPLEEE) is disordered. A coiled-coil region spans residues 238–264 (VRAFELKTKEDLKKKLEEKDENKAAEK).

Belongs to the PtdIns transfer protein family. PI transfer class I subfamily. Post-translationally, phosphorylated in response to activation of rasG.

The protein resides in the cytoplasm. Its subcellular location is the golgi apparatus. Its function is as follows. Catalyzes the transfer of PtdIns and phosphatidylcholine between membranes. The sequence is that of Phosphatidylinositol transfer protein 1 (pitA) from Dictyostelium discoideum (Social amoeba).